Consider the following 834-residue polypeptide: DNA polymerase I, thermostable (834 aa).

The 87-residue stretch at 176–262 (RPEQWVDFRA…DLPLEVDLAQ (87 aa)) folds into the 5'-3' exonuclease domain. Positions 412–834 (ERLHRNLLKR…MGEDWLSAKG (423 aa)) are polymerase.

It belongs to the DNA polymerase type-A family.

The enzyme catalyses DNA(n) + a 2'-deoxyribonucleoside 5'-triphosphate = DNA(n+1) + diphosphate. In addition to polymerase activity, this DNA polymerase exhibits 5'-3' exonuclease activity. This Thermus thermophilus (strain ATCC 27634 / DSM 579 / HB8) protein is DNA polymerase I, thermostable (polA).